The primary structure comprises 820 residues: Serine/threonine-protein phosphatase 4 regulatory subunit 3-A (820 aa).

The WH1 domain maps to Met-1–Val-100. Over residues Glu-682–Glu-694 the composition is skewed to acidic residues. Disordered stretches follow at residues Glu-682–Gly-712 and Ala-750–Ser-820. Basic and acidic residues predominate over residues Glu-701–Gly-712. Composition is skewed to polar residues over residues Ala-750 to Ser-761 and Pro-768 to Gly-790. Residues Tyr-798–Asp-809 are compositionally biased toward acidic residues.

This sequence belongs to the SMEK family. Serine/threonine-protein phosphatase 4 (PP4) occurs in different assemblies of the catalytic and one or more regulatory subunits.

Functionally, regulatory subunit of serine/threonine-protein phosphatase 4 (PP4). This is Serine/threonine-protein phosphatase 4 regulatory subunit 3-A from Xenopus laevis (African clawed frog).